A 231-amino-acid chain; its full sequence is 7-cyano-7-deazaguanine synthase (231 aa).

8-18 (FSGGQDSTTCL) lines the ATP pocket. Zn(2+) is bound by residues C188, C197, C200, and C203.

Belongs to the QueC family. Requires Zn(2+) as cofactor.

The enzyme catalyses 7-carboxy-7-deazaguanine + NH4(+) + ATP = 7-cyano-7-deazaguanine + ADP + phosphate + H2O + H(+). Its pathway is purine metabolism; 7-cyano-7-deazaguanine biosynthesis. Catalyzes the ATP-dependent conversion of 7-carboxy-7-deazaguanine (CDG) to 7-cyano-7-deazaguanine (preQ(0)). The polypeptide is 7-cyano-7-deazaguanine synthase (Escherichia coli O127:H6 (strain E2348/69 / EPEC)).